The primary structure comprises 548 residues: Beta-lactamase-like protein 2 (548 aa).

An N-terminal signal peptide occupies residues 1 to 24; that stretch reads MKIMNKQSITIFLIICFLINLILS. 4 N-linked (GlcNAc...) asparagine glycosylation sites follow: Asn237, Asn258, Asn443, and Asn459.

It belongs to the beta-lactamase family.

The protein resides in the secreted. The chain is Beta-lactamase-like protein 2 from Dictyostelium discoideum (Social amoeba).